A 232-amino-acid chain; its full sequence is Transcriptional regulatory protein CpxR (232 aa).

The 113-residue stretch at 3–115 (KILLVDDDRE…ELVARIRAIL (113 aa)) folds into the Response regulatory domain. At Asp-51 the chain carries 4-aspartylphosphate. A DNA-binding region (ompR/PhoB-type) is located at residues 131-230 (SPTLEVDALS…LRGRGYLMVS (100 aa)).

As to quaternary structure, interacts with cognate sensor kinase CpxA. In terms of processing, phosphorylated by CpxA.

It localises to the cytoplasm. Its activity is regulated as follows. The two-component system is activated by envelope stress such as overexpression of some (misfolded) periplasmic proteins. In terms of biological role, response regulator member of the two-component regulatory system CpxA/CpxR which responds to envelope stress response by activating or, in some cases, repressing expression of downstream genes. Binds to the promoter regions of various genes in vitro, including ompC, cpxP, ryhB and mrkA and, when CpxR is phosphorylated, pecO. Represses expression of the major pilin of type 3 fimbriae MrkA as well as that of type 1 fimbriae FimA. Repression of expression of MrkA appears to be indirect, mediated by activation of the iron homeostasis regulator RyhB. This chain is Transcriptional regulatory protein CpxR, found in Klebsiella pneumoniae subsp. pneumoniae (strain HS11286).